The chain runs to 648 residues: Indolepyruvate oxidoreductase subunit IorA (648 aa).

4Fe-4S ferredoxin-type domains are found at residues 585 to 614 (PIYQVNEEKCTGCKICINAYGCPAIYWDAE) and 616 to 645 (KKARVDPLMCWGCGGCAQVCPFGAFEKVRE). [4Fe-4S] cluster is bound by residues Cys-594, Cys-597, Cys-600, Cys-606, Cys-625, Cys-628, Cys-631, and Cys-635.

As to quaternary structure, heterodimer of the IorA and IorB subunits. It depends on [4Fe-4S] cluster as a cofactor.

The catalysed reaction is indole-3-pyruvate + 2 oxidized [2Fe-2S]-[ferredoxin] + CoA = (indol-3-yl)acetyl-CoA + 2 reduced [2Fe-2S]-[ferredoxin] + CO2 + H(+). Catalyzes the ferredoxin-dependent oxidative decarboxylation of arylpyruvates. In Pyrococcus horikoshii (strain ATCC 700860 / DSM 12428 / JCM 9974 / NBRC 100139 / OT-3), this protein is Indolepyruvate oxidoreductase subunit IorA (iorA).